The primary structure comprises 140 residues: Large ribosomal subunit protein uL14 (140 aa).

It belongs to the universal ribosomal protein uL14 family. As to quaternary structure, component of the large ribosomal subunit.

The protein localises to the cytoplasm. Its function is as follows. Component of the large ribosomal subunit. The ribosome is a large ribonucleoprotein complex responsible for the synthesis of proteins in the cell. The protein is Large ribosomal subunit protein uL14 (rpl23) of Ictalurus punctatus (Channel catfish).